We begin with the raw amino-acid sequence, 506 residues long: Aminoaldehyde dehydrogenase 2 (506 aa).

A Na(+)-binding site is contributed by D101. Residues 161–163 and 187–190 each bind NAD(+); these read TPW and KPSE. L191 contributes to the Na(+) binding site. Residues 241–244 and E262 each bind NAD(+); that span reads STET. E262 serves as the catalytic Proton acceptor. Catalysis depends on C297, which acts as the Nucleophile. Residues E396 and W462 each contribute to the NAD(+) site.

It belongs to the aldehyde dehydrogenase family.

It catalyses the reaction 4-aminobutanal + NAD(+) + H2O = 4-aminobutanoate + NADH + 2 H(+). It carries out the reaction 3-aminopropanal + NAD(+) + H2O = beta-alanine + NADH + 2 H(+). The enzyme catalyses 4-(trimethylamino)butanal + NAD(+) + H2O = 4-(trimethylamino)butanoate + NADH + 2 H(+). The catalysed reaction is 4-guanidinobutanal + NAD(+) + H2O = 4-guanidinobutanoate + NADH + 2 H(+). It participates in amine and polyamine biosynthesis; betaine biosynthesis via choline pathway; betaine from betaine aldehyde: step 1/1. Its function is as follows. Dehydrogenase that catalyzes the oxidation of several aminoaldehydes. Metabolizes and detoxifies aldehyde products of polyamine degradation to non-toxic amino acids. Catalyzes the oxidation of 4-aminobutanal and 3-aminopropanal to 4-aminobutanoate and beta-alanine, respectively. Catalyzes the oxidation of 4-(trimethylamino)butanal and 4-guanidinobutanal to 4-trimethylammoniobutanoate and 4-guanidinobutanoate, respectively. The polypeptide is Aminoaldehyde dehydrogenase 2 (Zea mays (Maize)).